The following is a 541-amino-acid chain: Chaperonin GroEL (541 aa).

ATP is bound by residues 29 to 32, 86 to 90, Gly413, 476 to 478, and Asp492; these read TLGP, DGTTT, and NAA.

The protein belongs to the chaperonin (HSP60) family. As to quaternary structure, forms a cylinder of 14 subunits composed of two heptameric rings stacked back-to-back. Interacts with the co-chaperonin GroES.

The protein localises to the cytoplasm. The catalysed reaction is ATP + H2O + a folded polypeptide = ADP + phosphate + an unfolded polypeptide.. Its function is as follows. Together with its co-chaperonin GroES, plays an essential role in assisting protein folding. The GroEL-GroES system forms a nano-cage that allows encapsulation of the non-native substrate proteins and provides a physical environment optimized to promote and accelerate protein folding. This is Chaperonin GroEL from Streptococcus equi subsp. equi (strain 4047).